The primary structure comprises 445 residues: Xylose isomerase (445 aa).

Residues histidine 107 and aspartate 110 contribute to the active site. Residues glutamate 238, glutamate 274, histidine 277, aspartate 302, aspartate 313, aspartate 315, and aspartate 345 each coordinate Mg(2+).

This sequence belongs to the xylose isomerase family. As to quaternary structure, homotetramer. Requires Mg(2+) as cofactor.

It localises to the cytoplasm. The enzyme catalyses alpha-D-xylose = alpha-D-xylulofuranose. In Bacillus subtilis (strain 168), this protein is Xylose isomerase (xylA).